A 317-amino-acid polypeptide reads, in one-letter code: Malate dehydrogenase (317 aa).

NAD(+)-binding positions include 13–18 and D38; that span reads GAGNIG. Substrate-binding residues include R87 and R93. NAD(+)-binding positions include N100 and 123–125; that span reads VTN. 2 residues coordinate substrate: N125 and R156. H180 acts as the Proton acceptor in catalysis.

This sequence belongs to the LDH/MDH superfamily. MDH type 3 family.

It catalyses the reaction (S)-malate + NAD(+) = oxaloacetate + NADH + H(+). In terms of biological role, catalyzes the reversible oxidation of malate to oxaloacetate. This chain is Malate dehydrogenase, found in Anaplasma marginale (strain Florida).